Reading from the N-terminus, the 359-residue chain is Glycerol-1-phosphate dehydrogenase [NAD(P)+] (359 aa).

Residues G107–D111 and T129–S132 each bind NAD(+). D134 serves as a coordination point for substrate. S138 contributes to the NAD(+) binding site. D181 is a substrate binding site. Residues D181 and H261 each coordinate Zn(2+). H265 is a substrate binding site. H277 is a Zn(2+) binding site.

Belongs to the glycerol-1-phosphate dehydrogenase family. Zn(2+) is required as a cofactor.

Its subcellular location is the cytoplasm. It carries out the reaction sn-glycerol 1-phosphate + NAD(+) = dihydroxyacetone phosphate + NADH + H(+). It catalyses the reaction sn-glycerol 1-phosphate + NADP(+) = dihydroxyacetone phosphate + NADPH + H(+). It functions in the pathway membrane lipid metabolism; glycerophospholipid metabolism. Functionally, catalyzes the NAD(P)H-dependent reduction of dihydroxyacetonephosphate (DHAP or glycerone phosphate) to glycerol 1-phosphate (G1P). The G1P thus generated is used as the glycerophosphate backbone of phospholipids in the cellular membranes of Archaea. This chain is Glycerol-1-phosphate dehydrogenase [NAD(P)+], found in Methanospirillum hungatei JF-1 (strain ATCC 27890 / DSM 864 / NBRC 100397 / JF-1).